Reading from the N-terminus, the 197-residue chain is Probable UbiX-like flavin prenyltransferase (197 aa).

Residues 9–11 (GAT), serine 36, 87–90 (SMKT), and arginine 122 contribute to the FMN site.

This sequence belongs to the UbiX/PAD1 family. YclB subfamily. In terms of assembly, homododecamer.

The catalysed reaction is dimethylallyl phosphate + FMNH2 = prenylated FMNH2 + phosphate. In terms of biological role, flavin prenyltransferase that catalyzes the synthesis of the prenylated FMN cofactor (prenyl-FMN) for phenolic acid decarboxylase C. Involved in the decarboxylation and detoxification of phenolic derivatives under both aerobic and anaerobic conditions. This Escherichia coli protein is Probable UbiX-like flavin prenyltransferase (ecdB).